A 236-amino-acid chain; its full sequence is Phosphoribosylaminoimidazole-succinocarboxamide synthase (236 aa).

The protein belongs to the SAICAR synthetase family.

The enzyme catalyses 5-amino-1-(5-phospho-D-ribosyl)imidazole-4-carboxylate + L-aspartate + ATP = (2S)-2-[5-amino-1-(5-phospho-beta-D-ribosyl)imidazole-4-carboxamido]succinate + ADP + phosphate + 2 H(+). Its pathway is purine metabolism; IMP biosynthesis via de novo pathway; 5-amino-1-(5-phospho-D-ribosyl)imidazole-4-carboxamide from 5-amino-1-(5-phospho-D-ribosyl)imidazole-4-carboxylate: step 1/2. This is Phosphoribosylaminoimidazole-succinocarboxamide synthase from Campylobacter jejuni subsp. doylei (strain ATCC BAA-1458 / RM4099 / 269.97).